The chain runs to 361 residues: Alanine racemase (361 aa).

Catalysis depends on lysine 34, which acts as the Proton acceptor; specific for D-alanine. Lysine 34 is modified (N6-(pyridoxal phosphate)lysine). Arginine 129 contacts substrate. Tyrosine 256 acts as the Proton acceptor; specific for L-alanine in catalysis. Methionine 304 contacts substrate.

This sequence belongs to the alanine racemase family. The cofactor is pyridoxal 5'-phosphate.

The enzyme catalyses L-alanine = D-alanine. Its pathway is amino-acid biosynthesis; D-alanine biosynthesis; D-alanine from L-alanine: step 1/1. In terms of biological role, catalyzes the interconversion of L-alanine and D-alanine. May also act on other amino acids. In Corynebacterium glutamicum (strain R), this protein is Alanine racemase (alr).